A 481-amino-acid polypeptide reads, in one-letter code: ATP synthase subunit beta (481 aa).

160–167 (GGAGVGKT) serves as a coordination point for ATP.

The protein belongs to the ATPase alpha/beta chains family. As to quaternary structure, F-type ATPases have 2 components, CF(1) - the catalytic core - and CF(0) - the membrane proton channel. CF(1) has five subunits: alpha(3), beta(3), gamma(1), delta(1), epsilon(1). CF(0) has three main subunits: a(1), b(2) and c(9-12). The alpha and beta chains form an alternating ring which encloses part of the gamma chain. CF(1) is attached to CF(0) by a central stalk formed by the gamma and epsilon chains, while a peripheral stalk is formed by the delta and b chains.

Its subcellular location is the cell inner membrane. The catalysed reaction is ATP + H2O + 4 H(+)(in) = ADP + phosphate + 5 H(+)(out). Its function is as follows. Produces ATP from ADP in the presence of a proton gradient across the membrane. The catalytic sites are hosted primarily by the beta subunits. This Stigmatella aurantiaca protein is ATP synthase subunit beta.